Reading from the N-terminus, the 454-residue chain is tRNA modification GTPase MnmE (454 aa).

Residues Arg-23, Glu-80, and Lys-120 each contribute to the (6S)-5-formyl-5,6,7,8-tetrahydrofolate site. Residues 216–377 (GMKVVIAGRP…LRSHLKEAMG (162 aa)) enclose the TrmE-type G domain. Position 226 (Asn-226) interacts with K(+). GTP contacts are provided by residues 226 to 231 (NAGKSS), 245 to 251 (TDIAGTT), 270 to 273 (DTAG), and 358 to 360 (SAR). Mg(2+) is bound at residue Ser-230. 3 residues coordinate K(+): Thr-245, Ile-247, and Thr-250. Thr-251 is a binding site for Mg(2+). (6S)-5-formyl-5,6,7,8-tetrahydrofolate is bound at residue Lys-454.

Belongs to the TRAFAC class TrmE-Era-EngA-EngB-Septin-like GTPase superfamily. TrmE GTPase family. In terms of assembly, homodimer. Heterotetramer of two MnmE and two MnmG subunits. The cofactor is K(+).

Its subcellular location is the cytoplasm. Exhibits a very high intrinsic GTPase hydrolysis rate. Involved in the addition of a carboxymethylaminomethyl (cmnm) group at the wobble position (U34) of certain tRNAs, forming tRNA-cmnm(5)s(2)U34. The sequence is that of tRNA modification GTPase MnmE from Proteus mirabilis (strain HI4320).